A 692-amino-acid chain; its full sequence is Translation initiation factor IF-2 (692 aa).

Residues 194–363 (PRPPIVTVMG…LLVAEMEDLK (170 aa)) form the tr-type G domain. The tract at residues 203–210 (GHVDHGKT) is G1. Residue 203–210 (GHVDHGKT) participates in GTP binding. Residues 228 to 232 (GITQH) form a G2 region. The tract at residues 249–252 (DTPG) is G3. Residues 249–253 (DTPGH) and 303–306 (NKID) each bind GTP. Residues 303-306 (NKID) form a G4 region. Positions 339 to 341 (SAK) are G5.

This sequence belongs to the TRAFAC class translation factor GTPase superfamily. Classic translation factor GTPase family. IF-2 subfamily.

The protein localises to the cytoplasm. Its function is as follows. One of the essential components for the initiation of protein synthesis. Protects formylmethionyl-tRNA from spontaneous hydrolysis and promotes its binding to the 30S ribosomal subunits. Also involved in the hydrolysis of GTP during the formation of the 70S ribosomal complex. The polypeptide is Translation initiation factor IF-2 (Thermoanaerobacter sp. (strain X514)).